Consider the following 1111-residue polypeptide: Receptor-type guanylate cyclase gcy-7 (1111 aa).

An N-terminal signal peptide occupies residues 1-24; the sequence is MKPFYSMSLVLFLVITLLPKPMFP. Residues 25–488 are Extracellular-facing; that stretch reads QVATGTTGNV…CPKSFVDEYL (464 aa). Asn-80, Asn-300, Asn-326, Asn-353, Asn-389, Asn-407, Asn-430, and Asn-441 each carry an N-linked (GlcNAc...) asparagine glycan. Residues 489–509 traverse the membrane as a helical segment; it reads IWVIVAIVVLFLAITAAACGI. The Cytoplasmic segment spans residues 510 to 1111; the sequence is YFSIQARRQE…TLKSDEQLSD (602 aa). In terms of domain architecture, Protein kinase spans 536–838; the sequence is QINSKQKGKG…NDNLMDHVFN (303 aa). Residues 542-550 and Lys-568 contribute to the ATP site; that span reads KGKGEHSVR. A Guanylate cyclase domain is found at 896–1026; sequence TIFFSDVVQF…DAVNTASRME (131 aa).

The protein belongs to the adenylyl cyclase class-4/guanylyl cyclase family. As to expression, expressed asymmetrically in ASE left (ASEL) sensory neuron. Expressed in excretory canal cell.

It localises to the cell membrane. The catalysed reaction is GTP = 3',5'-cyclic GMP + diphosphate. Guanylate cyclase involved in the production of the second messenger cGMP. Unlike other guanylate cyclases expressed in ASE neurons, may not play a role in chemotaxis responses toward salt ions in ASEL (ASE left) sensory neurons. The polypeptide is Receptor-type guanylate cyclase gcy-7 (Caenorhabditis elegans).